The primary structure comprises 378 residues: Wnt inhibitory factor 1 (378 aa).

The signal sequence occupies residues 1–28; the sequence is MAFRTPAVQLHLKACVLLLLGGLLEAAY. The WIF domain maps to 36-175; it reads MWIDANQARI…PHNAIFFKTC (140 aa). N-linked (GlcNAc...) asparagine glycosylation occurs at N86. Cystine bridges form between C138/C175, C180/C190, C184/C196, C212/C222, C216/C228, and C230/C239. EGF-like domains lie at 176–205, 208–240, 243–272, 272–304, and 305–336; these read QRAKCPGGCRNGGYCNERQVCECQDGFYGV, EKALCSPRCLNGGLCMSPGVCICPPGYFGSSCE, NCSTTCLNGGTCFHPGKCICAVSFEGVRCE, ELSKCRQPCRNGGKCTGRNKCKCSKGYHGDLCS, and KAVCEPSCGAHGTCVEPNRCQCREGWHGRHCN. An N-linked (GlcNAc...) asparagine glycan is attached at N243. 9 disulfides stabilise this stretch: C244–C254, C248–C260, C262–C271, C276–C286, C280–C292, C294–C303, C308–C318, C312–C324, and C326–C335. The segment at 343–378 is disordered; that stretch reads VSNSQRVSPSKHKSPSVAAAKEAPETSQPSETNYVV. A compositionally biased stretch (polar residues) spans 367 to 378; it reads ETSQPSETNYVV.

Highly expressed in unsegmented paraxial mesoderm.

Its subcellular location is the secreted. Its function is as follows. Binds to WNT proteins and inhibits their activities. May be involved in mesoderm segmentation. The polypeptide is Wnt inhibitory factor 1 (wif1) (Danio rerio (Zebrafish)).